The chain runs to 158 residues: Glutathione peroxidase-like peroxiredoxin gpx1 (158 aa).

The active-site Cysteine sulfenic acid (-SOH) intermediate is the Cys-36. An intrachain disulfide couples Cys-36 to Cys-82.

This sequence belongs to the glutathione peroxidase family. As to quaternary structure, monomer.

It is found in the cytoplasm. The protein resides in the mitochondrion. The enzyme catalyses a hydroperoxide + [thioredoxin]-dithiol = an alcohol + [thioredoxin]-disulfide + H2O. Functionally, glutathione peroxidase-like protein that protects cells during oxidative stress. Has peroxidase activity reducing hydrogen peroxide, alkyl and phospholipid hydroperoxides using preferentially thioredoxin as a reducing power. May act as a scavenger of H(2)O(2). The chain is Glutathione peroxidase-like peroxiredoxin gpx1 from Schizosaccharomyces pombe (strain 972 / ATCC 24843) (Fission yeast).